A 100-amino-acid polypeptide reads, in one-letter code: Aspartyl/glutamyl-tRNA(Asn/Gln) amidotransferase subunit C (100 aa).

Belongs to the GatC family. As to quaternary structure, heterotrimer of A, B and C subunits.

It carries out the reaction L-glutamyl-tRNA(Gln) + L-glutamine + ATP + H2O = L-glutaminyl-tRNA(Gln) + L-glutamate + ADP + phosphate + H(+). The catalysed reaction is L-aspartyl-tRNA(Asn) + L-glutamine + ATP + H2O = L-asparaginyl-tRNA(Asn) + L-glutamate + ADP + phosphate + 2 H(+). In terms of biological role, allows the formation of correctly charged Asn-tRNA(Asn) or Gln-tRNA(Gln) through the transamidation of misacylated Asp-tRNA(Asn) or Glu-tRNA(Gln) in organisms which lack either or both of asparaginyl-tRNA or glutaminyl-tRNA synthetases. The reaction takes place in the presence of glutamine and ATP through an activated phospho-Asp-tRNA(Asn) or phospho-Glu-tRNA(Gln). This is Aspartyl/glutamyl-tRNA(Asn/Gln) amidotransferase subunit C from Novosphingobium aromaticivorans (strain ATCC 700278 / DSM 12444 / CCUG 56034 / CIP 105152 / NBRC 16084 / F199).